Reading from the N-terminus, the 177-residue chain is Nuclear export protein (177 aa).

Short sequence motifs (nuclear export signal) lie at residues 91-100 and 117-127; these read LWLPMKSLSL and MKHQILTRLKL.

Binds M1 protein. May interact with human nucleoporins and exportin XPO1/CRM1.

It is found in the virion. The protein localises to the host nucleus. Its function is as follows. Mediates the nuclear export of encapsidated genomic RNAs (ribonucleoproteins, RNPs). Acts as an adapter between viral RNPs complexes and the nuclear export machinery of the cell. Possesses no intrinsic RNA-binding activity, but includes a C-terminal M1-binding domain. This domain is believed to allow recognition of RNPs to which the M1 protein is bound. Because the M1 protein is not available in large quantities until the later stages of infection, such an indirect recognition mechanism probably ensures that genomic RNPs are not exported from the nucleus before sufficient quantities of viral mRNA and progeny genomic RNA have been synthesized. Furthermore, the RNPs enters the cytoplasm only when they have associated with the M1 protein that is necessary to guide them to the plasma membrane. May down-regulate viral RNA synthesis when overproduced. The chain is Nuclear export protein (NS) from Homo sapiens (Human).